The following is a 355-amino-acid chain: G protein alpha i subunit (355 aa).

A lipid anchor (N-myristoyl glycine) is attached at Gly-2. Cys-3 is lipidated: S-palmitoyl cysteine. Residues 33–355 (SEVKLLLLGA…KNNLKQIGLF (323 aa)) form the G-alpha domain. The tract at residues 36–49 (KLLLLGAGESGKST) is G1 motif. GTP contacts are provided by residues 41 to 48 (GAGESGKS), 176 to 182 (LRTRVKT), 201 to 205 (DVGGQ), 270 to 273 (NKKD), and Ala-327. Positions 48 and 182 each coordinate Mg(2+). The tract at residues 174–182 (DVLRTRVKT) is G2 motif. The segment at 197–206 (FKLFDVGGQR) is G3 motif. Residues 266-273 (ILFLNKKD) form a G4 motif region. Positions 325–330 (TCATDT) are G5 motif.

This sequence belongs to the G-alpha family. G(i/o/t/z) subfamily. In terms of assembly, g proteins are composed of 3 units; alpha, beta and gamma. The alpha chain contains the guanine nucleotide binding site. Interacts (via GDP- or GTP-bound forms) with loco (via GoLoco and RGS domains). Interacts with raps/pins.

The protein resides in the cell membrane. It is found in the apical cell membrane. Its function is as follows. Guanine nucleotide-binding proteins (G proteins) are involved as modulators or transducers in various transmembrane signaling systems. Plays a role in glial cell differentiation during embryogenesis; loco, Galphao and the G-protein coupled receptor, moody, are required in the surface glia to achieve effective insulation of the nerve cord. This Drosophila melanogaster (Fruit fly) protein is G protein alpha i subunit (Galphai).